The sequence spans 328 residues: Phenylalanine--tRNA ligase alpha subunit (328 aa).

E245 contacts Mg(2+).

The protein belongs to the class-II aminoacyl-tRNA synthetase family. Phe-tRNA synthetase alpha subunit type 1 subfamily. As to quaternary structure, tetramer of two alpha and two beta subunits. Mg(2+) is required as a cofactor.

It localises to the cytoplasm. The catalysed reaction is tRNA(Phe) + L-phenylalanine + ATP = L-phenylalanyl-tRNA(Phe) + AMP + diphosphate + H(+). The protein is Phenylalanine--tRNA ligase alpha subunit of Helicobacter pylori (strain HPAG1).